Consider the following 348-residue polypeptide: DnaJ homolog subfamily B member 5 (348 aa).

In terms of domain architecture, J spans Asp-4–Gly-68.

The polypeptide is DnaJ homolog subfamily B member 5 (DNAJB5) (Homo sapiens (Human)).